The following is a 210-amino-acid chain: 3-hexulose-6-phosphate synthase 3 (210 aa).

It belongs to the HPS/KGPDC family. HPS subfamily.

The enzyme catalyses D-ribulose 5-phosphate + formaldehyde = D-arabino-hex-3-ulose 6-phosphate. The protein operates within one-carbon metabolism; formaldehyde assimilation via RuMP pathway; D-fructose 6-phosphate from D-ribulose 5-phosphate and formaldehyde: step 1/2. In terms of biological role, catalyzes the condensation of ribulose 5-phosphate with formaldehyde to form 3-hexulose 6-phosphate. This is 3-hexulose-6-phosphate synthase 3 from Staphylococcus saprophyticus subsp. saprophyticus (strain ATCC 15305 / DSM 20229 / NCIMB 8711 / NCTC 7292 / S-41).